Here is a 578-residue protein sequence, read N- to C-terminus: Membrane protein insertase YidC (578 aa).

A helical membrane pass occupies residues isoleucine 3–tryptophan 23. The tract at residues alanine 34–aspartate 72 is disordered. Residues alanine 37–alanine 66 show a composition bias toward polar residues. 5 helical membrane-spanning segments follow: residues leucine 361–leucine 381, leucine 387–phenylalanine 407, leucine 457–leucine 477, proline 500–proline 520, and proline 535–valine 555.

Belongs to the OXA1/ALB3/YidC family. Type 1 subfamily. As to quaternary structure, interacts with the Sec translocase complex via SecD. Specifically interacts with transmembrane segments of nascent integral membrane proteins during membrane integration.

It localises to the cell inner membrane. Its function is as follows. Required for the insertion and/or proper folding and/or complex formation of integral membrane proteins into the membrane. Involved in integration of membrane proteins that insert both dependently and independently of the Sec translocase complex, as well as at least some lipoproteins. Aids folding of multispanning membrane proteins. The chain is Membrane protein insertase YidC from Pseudomonas aeruginosa (strain ATCC 15692 / DSM 22644 / CIP 104116 / JCM 14847 / LMG 12228 / 1C / PRS 101 / PAO1).